We begin with the raw amino-acid sequence, 152 residues long: Anti-CBASS protein Acb1 (152 aa).

Residue Y12 coordinates 3',3'-cGAMP. 3',3'-cUAMP is bound at residue Y12. Residues H44, T46, H113, and T115 contribute to the active site. 2 residues coordinate 3',3'-cGAMP: E141 and W147. The 3',3'-cUAMP site is built by E141 and W147.

Belongs to the anti-CBASS protein Acb1 family.

The enzyme catalyses 3',3'-cUAMP + H2O = U[3'-5']pAp[3'] + H(+). The catalysed reaction is 3',3',3'-c-tri-AMP + H2O = A[3'-5']pA[3'-5']pAp[3'] + H(+). It carries out the reaction 3',3',3'-cAAG + H2O = G[3'-5']pA[3'-5']pAp[3'] + H(+). It catalyses the reaction 3',3',3'-cAAG + H2O = A[3'-5']pG[3'-5']pAp[3'] + H(+). The enzyme catalyses 3',3'-cGAMP + H2O = G[3'-5']pAp[3'] + H(+). Its function is as follows. Counteracts the host CBASS antiviral system. Phosphodiesterase that enables metal-independent hydrolysis of the host cyclic di- and trinucleotide CBASS signals such as 3'3'-cGAMP, 3'3'cUA, and 3'3'3'-cAAA. Does not cleave cGG or cA4. Besides evasion of the CBASS system, might also enable evasion of the type III CRISPR systems that use cA3 signals. The polypeptide is Anti-CBASS protein Acb1 (57B) (Escherichia coli (Bacteriophage T4)).